The chain runs to 649 residues: Microtubule-associated protein VP6 (649 aa).

Its subcellular location is the virion. It localises to the host cytoplasm. The protein resides in the host cytoskeleton. Its function is as follows. Minor inner capsid component. Displays NTPase and RNA 5'-triphosphatase (RTPase) activities. May function as a cofactor of polymerase VP2. Associates with microtubules and plays a role in the formation, structural organization and morphology of viral inclusions, where the assembly of cores and the replication of viral RNA occur. This Cryphonectria parasitica (Chestnut blight fungus) protein is Microtubule-associated protein VP6 (S6).